A 520-amino-acid polypeptide reads, in one-letter code: Cytosol aminopeptidase (520 aa).

The Zn(2+) site is built by Lys286 and Asp291. Lys298 is an active-site residue. Asp309, Asp368, and Glu370 together coordinate Zn(2+). Arg372 is a catalytic residue.

The protein belongs to the peptidase M17 family. As to quaternary structure, homohexamer. It depends on Zn(2+) as a cofactor.

The protein resides in the cytoplasm. The catalysed reaction is Release of an N-terminal amino acid, Xaa-|-Yaa-, in which Xaa is preferably Leu, but may be other amino acids including Pro although not Arg or Lys, and Yaa may be Pro. Amino acid amides and methyl esters are also readily hydrolyzed, but rates on arylamides are exceedingly low.. It carries out the reaction Release of N-terminal proline from a peptide.. Functionally, presumably involved in the processing and regular turnover of intracellular proteins. Catalyzes the removal of unsubstituted N-terminal amino acids from various peptides. The chain is Cytosol aminopeptidase (lap) from Dictyostelium discoideum (Social amoeba).